Reading from the N-terminus, the 359-residue chain is Histidinol-phosphate aminotransferase (359 aa).

An N6-(pyridoxal phosphate)lysine modification is found at lysine 212.

Belongs to the class-II pyridoxal-phosphate-dependent aminotransferase family. Histidinol-phosphate aminotransferase subfamily. In terms of assembly, homodimer. It depends on pyridoxal 5'-phosphate as a cofactor.

The enzyme catalyses L-histidinol phosphate + 2-oxoglutarate = 3-(imidazol-4-yl)-2-oxopropyl phosphate + L-glutamate. It functions in the pathway amino-acid biosynthesis; L-histidine biosynthesis; L-histidine from 5-phospho-alpha-D-ribose 1-diphosphate: step 7/9. In Buchnera aphidicola subsp. Schlechtendalia chinensis, this protein is Histidinol-phosphate aminotransferase.